We begin with the raw amino-acid sequence, 254 residues long: Countin-2 (254 aa).

The signal sequence occupies residues Met1–Ala19. In terms of domain architecture, Saposin B-type spans Gln22 to Gln107. Disulfide bonds link Cys26-Cys103, Cys29-Cys97, and Cys56-Cys68. Residues Asn110 and Asn219 are each glycosylated (N-linked (GlcNAc...) asparagine). A disordered region spans residues Gln231–Tyr254. The span at Thr233–Ser245 shows a compositional bias: gly residues.

Belongs to the countin family.

The protein resides in the secreted. Its function is as follows. Cell-counting factor that limits the minimum size of the multicellular structure. May up-regulate the expression of both gp24 and gp80, which mediate cell adhesion. This Dictyostelium discoideum (Social amoeba) protein is Countin-2 (ctnB).